The following is a 268-amino-acid chain: uncharacterized protein (268 aa).

An RING-type; degenerate zinc finger spans residues 21 to 61 (CVICLQKDGLRAQLSPCGHDQFDYSCICRWMDQSLTCPICK).

It is found in the mitochondrion. Its subcellular location is the nucleus. This is an uncharacterized protein from Schizosaccharomyces pombe (strain 972 / ATCC 24843) (Fission yeast).